The primary structure comprises 154 residues: Large ribosomal subunit protein uL13 (154 aa).

Belongs to the universal ribosomal protein uL13 family. In terms of assembly, part of the 50S ribosomal subunit.

Its function is as follows. This protein is one of the early assembly proteins of the 50S ribosomal subunit, although it is not seen to bind rRNA by itself. It is important during the early stages of 50S assembly. This chain is Large ribosomal subunit protein uL13, found in Brucella melitensis biotype 2 (strain ATCC 23457).